We begin with the raw amino-acid sequence, 257 residues long: Enolase-phosphatase E1 (257 aa).

Residues Asp-16 and Glu-18 each contribute to the Mg(2+) site. Substrate is bound by residues 150 to 151 (SS) and Lys-184. A Mg(2+)-binding site is contributed by Asp-209.

The protein belongs to the HAD-like hydrolase superfamily. MasA/MtnC family. In terms of assembly, monomer. It depends on Mg(2+) as a cofactor.

The protein resides in the cytoplasm. Its subcellular location is the nucleus. It carries out the reaction 5-methylsulfanyl-2,3-dioxopentyl phosphate + H2O = 1,2-dihydroxy-5-(methylsulfanyl)pent-1-en-3-one + phosphate. It participates in amino-acid biosynthesis; L-methionine biosynthesis via salvage pathway; L-methionine from S-methyl-5-thio-alpha-D-ribose 1-phosphate: step 3/6. It functions in the pathway amino-acid biosynthesis; L-methionine biosynthesis via salvage pathway; L-methionine from S-methyl-5-thio-alpha-D-ribose 1-phosphate: step 4/6. Bifunctional enzyme that catalyzes the enolization of 2,3-diketo-5-methylthiopentyl-1-phosphate (DK-MTP-1-P) into the intermediate 2-hydroxy-3-keto-5-methylthiopentenyl-1-phosphate (HK-MTPenyl-1-P), which is then dephosphorylated to form the acireductone 1,2-dihydroxy-3-keto-5-methylthiopentene (DHK-MTPene). The polypeptide is Enolase-phosphatase E1 (Enoph1) (Mus musculus (Mouse)).